Here is a 99-residue protein sequence, read N- to C-terminus: Integration host factor subunit beta (99 aa).

The protein belongs to the bacterial histone-like protein family. In terms of assembly, heterodimer of an alpha and a beta chain.

In terms of biological role, this protein is one of the two subunits of integration host factor, a specific DNA-binding protein that functions in genetic recombination as well as in transcriptional and translational control. This is Integration host factor subunit beta from Laribacter hongkongensis (strain HLHK9).